A 437-amino-acid polypeptide reads, in one-letter code: Bifunctional protein GlmU (437 aa).

The segment at 1-223 is pyrophosphorylase; that stretch reads MHNTAVILAA…WDECRGVNSR (223 aa). UDP-N-acetyl-alpha-D-glucosamine-binding positions include 8-11, Lys22, Gln70, 75-76, 96-98, Gly135, Glu149, Asn164, and Asn221; these read LAAG, GT, and YGD. Asp98 is a binding site for Mg(2+). Asn221 is a Mg(2+) binding site. Residues 224 to 244 are linker; it reads AELAAAEAAMQSRLRAAALAA. Residues 245–437 form an N-acetyltransferase region; sequence GVTMTAPETV…AELRMTKGKR (193 aa). Arg310 and Lys328 together coordinate UDP-N-acetyl-alpha-D-glucosamine. His340 serves as the catalytic Proton acceptor. UDP-N-acetyl-alpha-D-glucosamine-binding residues include Tyr343 and Asn354. Residues Ala357, 363–364, Ser382, Ala400, and Arg417 each bind acetyl-CoA; that span reads NY.

The protein in the N-terminal section; belongs to the N-acetylglucosamine-1-phosphate uridyltransferase family. In the C-terminal section; belongs to the transferase hexapeptide repeat family. As to quaternary structure, homotrimer. The cofactor is Mg(2+).

Its subcellular location is the cytoplasm. The catalysed reaction is alpha-D-glucosamine 1-phosphate + acetyl-CoA = N-acetyl-alpha-D-glucosamine 1-phosphate + CoA + H(+). The enzyme catalyses N-acetyl-alpha-D-glucosamine 1-phosphate + UTP + H(+) = UDP-N-acetyl-alpha-D-glucosamine + diphosphate. Its pathway is nucleotide-sugar biosynthesis; UDP-N-acetyl-alpha-D-glucosamine biosynthesis; N-acetyl-alpha-D-glucosamine 1-phosphate from alpha-D-glucosamine 6-phosphate (route II): step 2/2. It functions in the pathway nucleotide-sugar biosynthesis; UDP-N-acetyl-alpha-D-glucosamine biosynthesis; UDP-N-acetyl-alpha-D-glucosamine from N-acetyl-alpha-D-glucosamine 1-phosphate: step 1/1. The protein operates within bacterial outer membrane biogenesis; LPS lipid A biosynthesis. Catalyzes the last two sequential reactions in the de novo biosynthetic pathway for UDP-N-acetylglucosamine (UDP-GlcNAc). The C-terminal domain catalyzes the transfer of acetyl group from acetyl coenzyme A to glucosamine-1-phosphate (GlcN-1-P) to produce N-acetylglucosamine-1-phosphate (GlcNAc-1-P), which is converted into UDP-GlcNAc by the transfer of uridine 5-monophosphate (from uridine 5-triphosphate), a reaction catalyzed by the N-terminal domain. This Acidiphilium cryptum (strain JF-5) protein is Bifunctional protein GlmU.